The sequence spans 139 residues: MGELANCPKCNALFLKTKLQTVCQACIKEEEKSFETVYKFLRKQENRQSTLSRITEETGVEEELILKFIRQKRIQITHLPNLAYPCERCGTSIREGKFCKACQSDIKDQMDHLNHEDALKIEKENSKKDTYYAYNTKNS.

This sequence to S.typhimurium FliF.

May be involved in the assembly, structure, or function of the flagellum. May polymerize to form a filamentous structure that is part of the flagellum. This is an uncharacterized protein from Bacillus subtilis (strain 168).